A 185-amino-acid polypeptide reads, in one-letter code: Lipopolysaccharide export system protein LptA (185 aa).

The N-terminal stretch at 1–27 (MKFKTNKLSLNLVLASSLLAASIPAFA) is a signal peptide. Positions 166–185 (PSQLQDKNNKGQTPAQKKGN) are disordered.

Belongs to the LptA family. In terms of assembly, component of the lipopolysaccharide transport and assembly complex.

The protein resides in the periplasm. Its function is as follows. Involved in the assembly of lipopolysaccharide (LPS). Required for the translocation of LPS from the inner membrane to the outer membrane. May form a bridge between the inner membrane and the outer membrane, via interactions with LptC and LptD, thereby facilitating LPS transfer across the periplasm. This is Lipopolysaccharide export system protein LptA from Escherichia coli O157:H7.